We begin with the raw amino-acid sequence, 943 residues long: Serine/threonine-protein kinase ATG1 (943 aa).

The Protein kinase domain occupies 22–327; that stretch reads FVIDKEIGKG…FEDFFHHPVI (306 aa). ATP contacts are provided by residues 28 to 36 and Lys-51; that span reads IGKGSFAQV. Asp-165 (proton acceptor) is an active-site residue. Disordered stretches follow at residues 334–468, 503–561, 774–800, 858–888, and 914–943; these read LVED…LTDE, QQGQ…SPGA, LPEE…GGQA, HLPK…SDDK, and AASK…SVPT. Over residues 338 to 352 the composition is skewed to basic and acidic residues; that stretch reads DIPKPEKPVLAETKS. Residues 517-529 are compositionally biased toward polar residues; sequence ATQQGHPTSTTGA. Positions 542–554 are enriched in basic and acidic residues; that stretch reads RNDHYRKASHDKT. Over residues 919–928 the composition is skewed to low complexity; the sequence is QQQQQQQQVV.

Belongs to the protein kinase superfamily. Ser/Thr protein kinase family. APG1/unc-51/ULK1 subfamily. As to quaternary structure, homodimer. Forms a ternary complex with ATG13 and ATG17.

The protein resides in the cytoplasm. Its subcellular location is the preautophagosomal structure membrane. It catalyses the reaction L-seryl-[protein] + ATP = O-phospho-L-seryl-[protein] + ADP + H(+). The enzyme catalyses L-threonyl-[protein] + ATP = O-phospho-L-threonyl-[protein] + ADP + H(+). Serine/threonine protein kinase involved in the cytoplasm to vacuole transport (Cvt) and found to be essential in autophagy, where it is required for the formation of autophagosomes. Involved in the clearance of protein aggregates which cannot be efficiently cleared by the proteasome. Required for selective autophagic degradation of the nucleus (nucleophagy) as well as for mitophagy which contributes to regulate mitochondrial quantity and quality by eliminating the mitochondria to a basal level to fulfill cellular energy requirements and preventing excess ROS production. Also involved in endoplasmic reticulum-specific autophagic process, in selective removal of ER-associated degradation (ERAD) substrates. Plays a key role in ATG9 and ATG23 cycling through the pre-autophagosomal structure and is necessary to promote ATG18 binding to ATG9 through phosphorylation of ATG9. Catalyzes phosphorylation of ATG4, decreasing the interaction between ATG4 and ATG8 and impairing deconjugation of PE-conjugated forms of ATG8. This chain is Serine/threonine-protein kinase ATG1, found in Chaetomium globosum (strain ATCC 6205 / CBS 148.51 / DSM 1962 / NBRC 6347 / NRRL 1970) (Soil fungus).